The sequence spans 251 residues: Triosephosphate isomerase (251 aa).

Residue 9–11 participates in substrate binding; that stretch reads NWK. The Electrophile role is filled by His-96. Glu-166 (proton acceptor) is an active-site residue. Substrate contacts are provided by residues Gly-172, Ser-212, and 233–234; that span reads GG.

It belongs to the triosephosphate isomerase family. Homodimer.

The protein resides in the cytoplasm. It catalyses the reaction D-glyceraldehyde 3-phosphate = dihydroxyacetone phosphate. It functions in the pathway carbohydrate biosynthesis; gluconeogenesis. It participates in carbohydrate degradation; glycolysis; D-glyceraldehyde 3-phosphate from glycerone phosphate: step 1/1. Functionally, involved in the gluconeogenesis. Catalyzes stereospecifically the conversion of dihydroxyacetone phosphate (DHAP) to D-glyceraldehyde-3-phosphate (G3P). This chain is Triosephosphate isomerase, found in Pelodictyon phaeoclathratiforme (strain DSM 5477 / BU-1).